Here is a 242-residue protein sequence, read N- to C-terminus: ATP-dependent dethiobiotin synthetase BioD (242 aa).

Residue 12–17 (SVGKTI) coordinates ATP. Threonine 16 serves as a coordination point for Mg(2+). Residue lysine 37 is part of the active site. Aspartate 66 contributes to the ATP binding site. Mg(2+) contacts are provided by aspartate 66 and glutamate 124. 184-185 (NR) is an ATP binding site.

The protein belongs to the dethiobiotin synthetase family. In terms of assembly, homodimer. Mg(2+) serves as cofactor.

The protein localises to the cytoplasm. It carries out the reaction (7R,8S)-7,8-diammoniononanoate + CO2 + ATP = (4R,5S)-dethiobiotin + ADP + phosphate + 3 H(+). Its pathway is cofactor biosynthesis; biotin biosynthesis; biotin from 7,8-diaminononanoate: step 1/2. In terms of biological role, catalyzes a mechanistically unusual reaction, the ATP-dependent insertion of CO2 between the N7 and N8 nitrogen atoms of 7,8-diaminopelargonic acid (DAPA, also called 7,8-diammoniononanoate) to form a ureido ring. This is ATP-dependent dethiobiotin synthetase BioD from Mannheimia succiniciproducens (strain KCTC 0769BP / MBEL55E).